We begin with the raw amino-acid sequence, 273 residues long: Polyamine aminopropyltransferase (273 aa).

The 234-residue stretch at 5–238 (ENWFSERYSD…GFWSFTIASE (234 aa)) folds into the PABS domain. Q34 contacts S-methyl-5'-thioadenosine. 2 residues coordinate spermidine: H65 and D90. Residues E109 and 140 to 141 (DG) contribute to the S-methyl-5'-thioadenosine site. D158 acts as the Proton acceptor in catalysis. 158 to 161 (DSTD) is a binding site for spermidine. An S-methyl-5'-thioadenosine-binding site is contributed by P165.

It belongs to the spermidine/spermine synthase family. Homodimer or homotetramer.

The protein localises to the cytoplasm. It carries out the reaction S-adenosyl 3-(methylsulfanyl)propylamine + putrescine = S-methyl-5'-thioadenosine + spermidine + H(+). Its pathway is amine and polyamine biosynthesis; spermidine biosynthesis; spermidine from putrescine: step 1/1. Functionally, catalyzes the irreversible transfer of a propylamine group from the amino donor S-adenosylmethioninamine (decarboxy-AdoMet) to putrescine (1,4-diaminobutane) to yield spermidine. The polypeptide is Polyamine aminopropyltransferase (Thermoplasma volcanium (strain ATCC 51530 / DSM 4299 / JCM 9571 / NBRC 15438 / GSS1)).